The sequence spans 100 residues: Urease subunit gamma (100 aa).

This sequence belongs to the urease gamma subunit family. Heterotrimer of UreA (gamma), UreB (beta) and UreC (alpha) subunits. Three heterotrimers associate to form the active enzyme.

Its subcellular location is the cytoplasm. It catalyses the reaction urea + 2 H2O + H(+) = hydrogencarbonate + 2 NH4(+). Its pathway is nitrogen metabolism; urea degradation; CO(2) and NH(3) from urea (urease route): step 1/1. The polypeptide is Urease subunit gamma (Paraburkholderia xenovorans (strain LB400)).